The primary structure comprises 236 residues: TVP38/TMEM64 family membrane protein YdjX (236 aa).

The next 5 membrane-spanning stretches (helical) occupy residues 7–27, 50–70, 72–92, 156–176, and 192–212; these read FLFA…FGLF, LYIL…ILVI, GGIV…ATLA, IAFW…IVIY, and FILQ…LAKL. Positions 73–183 are VTT domain; the sequence is GIVFGPLLGT…VIYTVMASDL (111 aa).

It belongs to the TVP38/TMEM64 family.

The protein resides in the cell membrane. The protein is TVP38/TMEM64 family membrane protein YdjX (ydjX) of Escherichia coli (strain K12).